Consider the following 252-residue polypeptide: F-box/SPRY domain-containing protein 1 (252 aa).

Residues 1 to 48 (MVDPLCNYNVLEAIFSYLELNDLYRCSQVCKSWYHFLNDENSDVWRWH) form the F-box domain. The region spanning 58–250 (VKSDLLASVS…VSMVYLGTPL (193 aa)) is the B30.2/SPRY domain.

This sequence belongs to the FBXO45/Fsn family. In terms of assembly, component of an E3 ubiquitin ligase complex composed of hiw and Fsn.

It is found in the synapse. The protein operates within protein modification; protein ubiquitination. Its function is as follows. Required in the presynaptic motoneuron to down-regulate the levels of wnd and restrain synaptic terminal growth at the neuromuscular junction (NMJ). This Drosophila virilis (Fruit fly) protein is F-box/SPRY domain-containing protein 1.